The chain runs to 234 residues: Large ribosomal subunit protein uL1 (234 aa).

The protein belongs to the universal ribosomal protein uL1 family. As to quaternary structure, part of the 50S ribosomal subunit.

In terms of biological role, binds directly to 23S rRNA. The L1 stalk is quite mobile in the ribosome, and is involved in E site tRNA release. Functionally, protein L1 is also a translational repressor protein, it controls the translation of the L11 operon by binding to its mRNA. This Sodalis glossinidius (strain morsitans) protein is Large ribosomal subunit protein uL1.